The primary structure comprises 175 residues: Large ribosomal subunit protein uL10 (175 aa).

The protein belongs to the universal ribosomal protein uL10 family. In terms of assembly, part of the ribosomal stalk of the 50S ribosomal subunit. The N-terminus interacts with L11 and the large rRNA to form the base of the stalk. The C-terminus forms an elongated spine to which L12 dimers bind in a sequential fashion forming a multimeric L10(L12)X complex.

Forms part of the ribosomal stalk, playing a central role in the interaction of the ribosome with GTP-bound translation factors. This Methylobacterium nodulans (strain LMG 21967 / CNCM I-2342 / ORS 2060) protein is Large ribosomal subunit protein uL10.